The following is a 623-amino-acid chain: DNA-directed RNA polymerase subunit beta' (623 aa).

Positions 70, 72, 85, and 88 each coordinate Zn(2+). Residues Asp-466, Asp-468, and Asp-470 each coordinate Mg(2+).

The protein belongs to the RNA polymerase beta' chain family. RpoC1 subfamily. In plastids the minimal PEP RNA polymerase catalytic core is composed of four subunits: alpha, beta, beta', and beta''. When a (nuclear-encoded) sigma factor is associated with the core the holoenzyme is formed, which can initiate transcription. It depends on Mg(2+) as a cofactor. Zn(2+) is required as a cofactor.

The protein resides in the plastid. It localises to the chloroplast. The catalysed reaction is RNA(n) + a ribonucleoside 5'-triphosphate = RNA(n+1) + diphosphate. In terms of biological role, DNA-dependent RNA polymerase catalyzes the transcription of DNA into RNA using the four ribonucleoside triphosphates as substrates. This Rhodomonas salina (Cryptomonas salina) protein is DNA-directed RNA polymerase subunit beta'.